A 92-amino-acid polypeptide reads, in one-letter code: MARSLKKGPFVHYKLDKKVQENIAGGNKGVVKTWSRASMITPDFVGQTIAVHNGRQFVPVYVTENMVGHKLGEFSPTRSFRGHAGAKNKGKK.

Positions 73–92 (EFSPTRSFRGHAGAKNKGKK) are disordered. The segment covering 80-92 (FRGHAGAKNKGKK) has biased composition (basic residues).

This sequence belongs to the universal ribosomal protein uS19 family.

In terms of biological role, protein S19 forms a complex with S13 that binds strongly to the 16S ribosomal RNA. The sequence is that of Small ribosomal subunit protein uS19 from Flavobacterium psychrophilum (strain ATCC 49511 / DSM 21280 / CIP 103535 / JIP02/86).